We begin with the raw amino-acid sequence, 300 residues long: Type II methyltransferase M.Cfr9I (300 aa).

A disordered region spans residues 109–129 (RGYRAPDKKNPARAMAVRPDT).

It belongs to the N(4)/N(6)-methyltransferase family. N(4) subfamily.

It catalyses the reaction a 2'-deoxycytidine in DNA + S-adenosyl-L-methionine = an N(4)-methyl-2'-deoxycytidine in DNA + S-adenosyl-L-homocysteine + H(+). In terms of biological role, a beta subtype methylase, recognizes the double-stranded sequence 5'-CCCGGG-3', methylates C-2 on both strands, and protects the DNA from cleavage by the Cfr9I endonuclease. The sequence is that of Type II methyltransferase M.Cfr9I from Citrobacter freundii.